Here is a 529-residue protein sequence, read N- to C-terminus: MLPKKPIFSSTEQHRFDETRWVINVQKSLDAELEEHDLEEVTVSIFNVPKALMCSHPDSYTPHRVSIGPYHCLKPELHEMERYKLMIARKIRNQYNSFRFHDLVEKLQSMEIKIRACYHKYIGFNGETLLWIMAVDSSFLIEFLKIYSFRKVETLINRVGHNEILRDIMMIENQIPLFVLRKTLEFQLESTESADDLLLSVLTGLCKDLSPLVIKFDDDQILKAQFQECNHILDFLYQMIVPRIEEEELEEDDEENRADENGGNRAIRFMDEIKHQFKRVFASRPADLILRFPWRIISNLPGFMALKLSADYLFTRQENEATTTRQESVSILDIEKPPLVEELTIPSVSDLHKAGVRFKPTAHGNISTVTFDSNSGQFYLPVINLDINTETVLRNLVAYEATNTSGPLVFTRYTELINGIIDSEEDVRLLREQGVLVSRLKSDQEAAEMWNGMSKSVRLTKVGFLDKTIEDVNRYYTGRWKVKIGRLVEVYVYGSWQILAFLAAVLLLMLVSLQLFSLVFSSFLRFRAG.

2 N-linked (GlcNAc...) asparagine glycosylation sites follow: asparagine 365 and asparagine 403. Residues 498-518 (ILAFLAAVLLLMLVSLQLFSL) traverse the membrane as a helical segment.

The protein belongs to the UPF0481 family.

The protein resides in the membrane. The polypeptide is Putative UPF0481 protein At3g02645 (Arabidopsis thaliana (Mouse-ear cress)).